A 447-amino-acid chain; its full sequence is Protein odr-4 homolog (447 aa).

2 helical membrane-spanning segments follow: residues 82-102 (MLPGGLVVLGIFIITTLELAD) and 425-445 (IGVIAALAVAVLAAGISFHYF).

It belongs to the ODR-4 family. In terms of tissue distribution, ubiquitously expressed.

Its subcellular location is the membrane. Functionally, may play a role in the trafficking of a subset of G-protein coupled receptors. In Mus musculus (Mouse), this protein is Protein odr-4 homolog (Odr4).